The chain runs to 156 residues: Low molecular weight phosphotyrosine protein phosphatase (156 aa).

Cysteine 11 (nucleophile) is an active-site residue. Arginine 17 is a catalytic residue. Residue aspartate 128 is the Proton donor of the active site.

The protein belongs to the low molecular weight phosphotyrosine protein phosphatase family.

Its subcellular location is the cytoplasm. It carries out the reaction O-phospho-L-tyrosyl-[protein] + H2O = L-tyrosyl-[protein] + phosphate. It catalyses the reaction a phosphate monoester + H2O = an alcohol + phosphate. In terms of biological role, may contribute to dephosphorylation of 'Tyr-15' of cdc2. This chain is Low molecular weight phosphotyrosine protein phosphatase (stp1), found in Schizosaccharomyces pombe (strain 972 / ATCC 24843) (Fission yeast).